Reading from the N-terminus, the 361-residue chain is Protein TIFY 8 (361 aa).

4 disordered regions span residues 53–78 (NKAAKAAMTPSTASASSAGGLGGLSS), 113–134 (RFSGNKRSNSDSHFTTQEHPET), 190–232 (QTAA…RKDL), and 268–361 (SGGS…KEAT). Positions 56–78 (AKAAMTPSTASASSAGGLGGLSS) are enriched in low complexity. Polar residues-rich tracts occupy residues 113–127 (RFSGNKRSNSDSHFT) and 208–232 (SSFTMPNSSKLESFAPSNTGNRKDL). Positions 232-267 (LASSTKQMTIFYGGQAHVFDDVHPNKADVIMALAGS) constitute a Tify domain. Basic and acidic residues predominate over residues 333–361 (GREHQGSIISRGRDIRDPVHRSDPEKEAT).

Belongs to the TIFY/JAZ family. As to quaternary structure, interacts with AFPH2/NINJA. Post-translationally, ubiquitinated. Targeted for degradation by the SCF(COI1) E3 ubiquitin ligase-proteasome pathway during jasmonate signaling.

It is found in the nucleus. Its function is as follows. Repressor of jasmonate responses. The chain is Protein TIFY 8 from Arabidopsis thaliana (Mouse-ear cress).